We begin with the raw amino-acid sequence, 153 residues long: Ribonuclease VapC6 (153 aa).

A PINc domain is found at 6 to 152; the sequence is VFIDSSVMVG…EKVDFIEIIK (147 aa). Mg(2+) is bound by residues Asp9 and Asp120.

Belongs to the PINc/VapC protein family. Requires Mg(2+) as cofactor.

In terms of biological role, toxic component of a type II toxin-antitoxin (TA) system. An RNase. The sequence is that of Ribonuclease VapC6 from Methanocaldococcus jannaschii (strain ATCC 43067 / DSM 2661 / JAL-1 / JCM 10045 / NBRC 100440) (Methanococcus jannaschii).